The sequence spans 508 residues: Lysine--tRNA ligase (508 aa).

2 residues coordinate Mg(2+): Glu-418 and Glu-425.

It belongs to the class-II aminoacyl-tRNA synthetase family. Homodimer. The cofactor is Mg(2+).

The protein localises to the cytoplasm. It catalyses the reaction tRNA(Lys) + L-lysine + ATP = L-lysyl-tRNA(Lys) + AMP + diphosphate. In Burkholderia multivorans (strain ATCC 17616 / 249), this protein is Lysine--tRNA ligase.